The chain runs to 20 residues: Fibrinogen beta chain (20 aa).

Position 5 is a sulfotyrosine (Tyr5).

Heterohexamer; disulfide linked. Contains 2 sets of 3 non-identical chains (alpha, beta and gamma). The 2 heterotrimers are in head to head conformation with the N-termini in a small central domain. In terms of processing, conversion of fibrinogen to fibrin is triggered by thrombin, which cleaves fibrinopeptides A and B from alpha and beta chains, and thus exposes the N-terminal polymerization sites responsible for the formation of the soft clot.

Its subcellular location is the secreted. Its function is as follows. Cleaved by the protease thrombin to yield monomers which, together with fibrinogen alpha (FGA) and fibrinogen gamma (FGG), polymerize to form an insoluble fibrin matrix. Fibrin has a major function in hemostasis as one of the primary components of blood clots. In addition, functions during the early stages of wound repair to stabilize the lesion and guide cell migration during re-epithelialization. Was originally thought to be essential for platelet aggregation, based on in vitro studies using anticoagulated blood. However subsequent studies have shown that it is not absolutely required for thrombus formation in vivo. Enhances expression of SELP in activated platelets. Maternal fibrinogen is essential for successful pregnancy. Fibrin deposition is also associated with infection, where it protects against IFNG-mediated hemorrhage. May also facilitate the antibacterial immune response via both innate and T-cell mediated pathways. This is Fibrinogen beta chain (FGB) from Capra hircus (Goat).